Consider the following 201-residue polypeptide: Pyridoxine/pyridoxamine 5'-phosphate oxidase (201 aa).

FMN is bound by residues 49 to 54, 64 to 65, Lys-71, and Gln-93; these read RMVLLK and YT. Lys-54 lines the substrate pocket. Substrate-binding residues include Tyr-111, Arg-115, and Ser-119. FMN-binding positions include 128 to 129 and Trp-172; that span reads QS. Substrate is bound at residue 178 to 180; the sequence is RLH. Arg-182 contacts FMN.

The protein belongs to the pyridoxamine 5'-phosphate oxidase family. Homodimer. FMN serves as cofactor.

It catalyses the reaction pyridoxamine 5'-phosphate + O2 + H2O = pyridoxal 5'-phosphate + H2O2 + NH4(+). The enzyme catalyses pyridoxine 5'-phosphate + O2 = pyridoxal 5'-phosphate + H2O2. It functions in the pathway cofactor metabolism; pyridoxal 5'-phosphate salvage; pyridoxal 5'-phosphate from pyridoxamine 5'-phosphate: step 1/1. The protein operates within cofactor metabolism; pyridoxal 5'-phosphate salvage; pyridoxal 5'-phosphate from pyridoxine 5'-phosphate: step 1/1. In terms of biological role, catalyzes the oxidation of either pyridoxine 5'-phosphate (PNP) or pyridoxamine 5'-phosphate (PMP) into pyridoxal 5'-phosphate (PLP). In Roseobacter denitrificans (strain ATCC 33942 / OCh 114) (Erythrobacter sp. (strain OCh 114)), this protein is Pyridoxine/pyridoxamine 5'-phosphate oxidase.